The following is a 128-amino-acid chain: Glycine cleavage system H protein (128 aa).

Positions 22 to 104 (TALVGVTDYA…YASGWLVKIK (83 aa)) constitute a Lipoyl-binding domain. N6-lipoyllysine is present on Lys-63.

It belongs to the GcvH family. In terms of assembly, the glycine cleavage system is composed of four proteins: P, T, L and H. (R)-lipoate serves as cofactor.

Its function is as follows. The glycine cleavage system catalyzes the degradation of glycine. The H protein shuttles the methylamine group of glycine from the P protein to the T protein. This Halothermothrix orenii (strain H 168 / OCM 544 / DSM 9562) protein is Glycine cleavage system H protein.